The sequence spans 706 residues: Sodium- and chloride-dependent glycine transporter 1 (706 aa).

Residues 1-26 are disordered; that stretch reads MSGGDTRAAIARPRMAAAHGPVAPSS. At 1-108 the chain is on the cytoplasmic side; the sequence is MSGGDTRAAI…KRGNWGNQIE (108 aa). Residues 7 to 18 show a composition bias toward low complexity; that stretch reads RAAIARPRMAAA. 3 consecutive transmembrane segments (helical) span residues 109 to 129, 136 to 156, and 188 to 208; these read FVLT…FPYL, GAFM…LFFM, and VSTY…YYFF. Topologically, residues 209-285 are extracellular; the sequence is SSMTHVLPWA…LSDDIGNFGE (77 aa). 9 helical membrane passes run 286 to 306, 315 to 335, 360 to 380, 407 to 427, 450 to 470, 506 to 526, 530 to 550, 570 to 590, and 610 to 630; these read VRLP…LCLI, VVYF…VRGV, VWGD…GGLI, SVYA…HLGV, LLPI…LLGL, VAGF…WLLL, YAAS…IMYI, LFFQ…ILVF, and VAIG…YAMF. Residues 631-706 lie on the Cytoplasmic side of the membrane; that stretch reads RLCRTDGDTL…GSSRLQDSRI (76 aa). Residues Ser-673 and Ser-698 each carry the phosphoserine modification. Residues 695–706 are essential for interaction with EXOC1; sequence SNGSSRLQDSRI.

It belongs to the sodium:neurotransmitter symporter (SNF) (TC 2.A.22) family. SLC6A9 subfamily. As to quaternary structure, interacts with EXOC1; interaction increases the transporter capacity of SLC6A9 probably by promoting its insertion into the cell membrane. Interacts with EXOC3 and EXOC4. In terms of tissue distribution, expressed in the brain, kidney, pancreas, lung, placenta and liver. Expressed only in the brain.

It is found in the cell membrane. It carries out the reaction glycine(out) + chloride(out) + 2 Na(+)(out) = glycine(in) + chloride(in) + 2 Na(+)(in). With respect to regulation, inhibited by sarcosine. Its function is as follows. Sodium- and chloride-dependent glycine transporter. Essential for regulating glycine concentrations at inhibitory glycinergic synapses. In terms of biological role, sodium- and chloride-dependent glycine transporter. The polypeptide is Sodium- and chloride-dependent glycine transporter 1 (SLC6A9) (Homo sapiens (Human)).